We begin with the raw amino-acid sequence, 1848 residues long: Unconventional myosin-Vb (1848 aa).

N-acetylmethionine is present on methionine 1. One can recognise a Myosin N-terminal SH3-like domain in the interval 8-60; it reads SQCTRVWIPDPDEVWRSAELTKDYKEGDKSLQLRLEDETILEYPIDVQRNQLP. The requires for interaction with LIMA1 stretch occupies residues 21-40; it reads VWRSAELTKDYKEGDKSLQL. Residues 69–761 form the Myosin motor domain; sequence VGENDLTALS…QVAYLEKLRA (693 aa). 163–170 serves as a coordination point for ATP; sequence GESGAGKT. The interval 596-630 is disordered; that stretch reads KDPVPATTPGKGSSSKISVRSARPPMKVSNKEHKK. Positions 640–662 are actin-binding; the sequence is LHLLMETLNATTPHYVRCIKPND. 6 consecutive IQ domains span residues 769 to 798, 792 to 821, 817 to 848, 840 to 869, 865 to 896, and 888 to 917; these read IMIQ…QRYC, LTLQ…VLQK, VVLQ…FTRA, VVIQ…TIQK, TTIQ…AFRM, and IVIQ…EHLK. Coiled-coil stretches lie at residues 899 to 1266 and 1341 to 1471; these read ARRE…ILRT and RLLE…GMLE. Disordered stretches follow at residues 1093 to 1123 and 1166 to 1192; these read QTPG…EIGD and QLEK…LDPN. Residues 1101–1121 show a composition bias toward polar residues; it reads PSNQSSLESDSNYPSISTSEI. Residues 1166–1179 are compositionally biased toward basic and acidic residues; it reads QLEKREQQDSKKVQ. Position 1446 is a phosphoserine (serine 1446). Positions 1526-1803 constitute a Dilute domain; sequence TSTINGIKKV…IRTIQAQLQE (278 aa).

The protein belongs to the TRAFAC class myosin-kinesin ATPase superfamily. Myosin family. As to quaternary structure, component of the CART complex, at least composed of ACTN4, HGS/HRS, MYO5B and TRIM3. Interacts with RAB11FIP2, RAB11A, and RAB8A. Found in a complex with CFTR and RAB11A. Interacts with NPC1L1;. Interacts with LIMA1.

Its subcellular location is the cytoplasm. Its function is as follows. May be involved in vesicular trafficking via its association with the CART complex. The CART complex is necessary for efficient transferrin receptor recycling but not for EGFR degradation. Required in a complex with RAB11A and RAB11FIP2 for the transport of NPC1L1 to the plasma membrane. Together with RAB11A participates in CFTR trafficking to the plasma membrane and TF (transferrin) recycling in nonpolarized cells. Together with RAB11A and RAB8A participates in epithelial cell polarization. Together with RAB25 regulates transcytosis. Required for proper localization of bile salt export pump ABCB11 at the apical/canalicular plasma membrane of hepatocytes. The chain is Unconventional myosin-Vb (MYO5B) from Homo sapiens (Human).